A 786-amino-acid chain; its full sequence is Leucine-rich repeat extensin-like protein 2 (786 aa).

The N-terminal stretch at Met1–Gly28 is a signal peptide. N-linked (GlcNAc...) asparagine glycans are attached at residues Asn73 and Asn79. LRR repeat units lie at residues Thr100–Leu124, Thr125–His147, Lys149–Leu172, Pro173–Lys196, Leu198–Ser219, Val221–Gly243, Lys244–Leu267, Lys268–Met291, and Lys292–Leu315. N-linked (GlcNAc...) asparagine glycans are attached at residues Asn255 and Asn269. Residues Asn320 and Asn346 are each glycosylated (N-linked (GlcNAc...) asparagine). Disordered stretches follow at residues Ile352 to Val372, Phe390 to Val589, Pro624 to Pro645, and Pro694 to Tyr786. Positions Asp353–Lys362 are enriched in basic and acidic residues. The interval Ser384–Tyr786 is contains the Ser-Pro(4) repeats. Composition is skewed to pro residues over residues Tyr460–Ser477, Tyr487–Lys542, and Ser566–Val589. Pro residues-rich tracts occupy residues Pro694–Thr713, Pro720–Lys737, Pro752–Pro769, and Ser777–Tyr786.

Hydroxylated on proline residues in the S-P-P-P-P repeat. Post-translationally, O-glycosylated on hydroxyprolines. Mostly expressed in roots, also present in stems at low levels. In roots, confined to differentiation zones, the collet, and meristematic cells of tips.

Its subcellular location is the secreted. The protein resides in the cell wall. Modulates cell morphogenesis by regulating cell wall formation and assembly, and/or growth polarization. Together with LRX2, component of the extracellular mechanism regulating root hair morphogenesis and elongation. The sequence is that of Leucine-rich repeat extensin-like protein 2 (LRX2) from Arabidopsis thaliana (Mouse-ear cress).